The following is a 105-amino-acid chain: Flower-specific defensin (105 aa).

The signal sequence occupies residues 1-25 (MARSLCFMAFAILAMMLFVAYEVQA). 4 disulfides stabilise this stretch: Cys28-Cys72, Cys39-Cys59, Cys45-Cys66, and Cys49-Cys68. Positions 73–105 (VFDEKMTKTGAEILAEEAKTLAAALLEEEIMDN) are cleaved as a propeptide — removed in mature form.

Belongs to the DEFL family. In terms of tissue distribution, most abundant in the epidermal cell layers of the petals and sepals, within the connective cells of the anthers, and the cortical cells of the style. Not detected in the tapetum, pollen mother cells, the transmitting tissue, the vascular bundles of the anther and style or in leaves. Expressed also in ovaries, but barley detectable in roots.

It localises to the secreted. The protein resides in the vacuole. Its function is as follows. Plant defense peptide with antifungal activity against F.oxysporum and B.cinerea. Retards the growth of the Lepidopteran insect pests H.armigera and H.punctigera. The chain is Flower-specific defensin (D1) from Nicotiana alata (Winged tobacco).